A 96-amino-acid chain; its full sequence is Phosphoribosyl-ATP pyrophosphatase (96 aa).

Belongs to the PRA-PH family.

It is found in the cytoplasm. The catalysed reaction is 1-(5-phospho-beta-D-ribosyl)-ATP + H2O = 1-(5-phospho-beta-D-ribosyl)-5'-AMP + diphosphate + H(+). The protein operates within amino-acid biosynthesis; L-histidine biosynthesis; L-histidine from 5-phospho-alpha-D-ribose 1-diphosphate: step 2/9. The protein is Phosphoribosyl-ATP pyrophosphatase of Methanococcus aeolicus (strain ATCC BAA-1280 / DSM 17508 / OCM 812 / Nankai-3).